Reading from the N-terminus, the 800-residue chain is MRVIRAVATLHAGRAAAVRQGVRSVSLGACRAAVETPSLRSAGSQFESRRLFSRSSYLRNANMTAAEIALKQAKELAASNMTPEAAAARMTPEEAKRLARVRNIGIAAHIDSGKTTVTERILFYTGRVKAIHEVRGRDGVGAKMDSMELERERGITIQSAATFADWKKKEKGVEETYHINLIDTPGHIDFTIEVERAMRVLDGAVMVLCAVSGVQSQTITVDRQMKRYNVPRISFVNKMDRMGANPWKAVEQINTKLKIPAAAIQVPIGSEKELEGVVDLIDMKCIRNDGQRGVNLKISKEIPAEIKELCEQKRQELIEKLADVDDEIAEMFLEEQTPTPEQIKAAIRRATIACKFTPVLMGSAIADKGVQPMLDAVCDYLPNPNDTDNTALDRSKGEQPVKLVPYNSLPFVGLAFKLEENPYGQLTYMRVYQGSLKKGAYLYNSRGNKKVRIPRIVRMHSNEMEDVNEIGAGEICAVFGVDCASGDTFTDGGLPYSLSSMYVPDAVMSLSIKPKRSSDADAFSKAMNRFMREDPTFRLHVDEESEETIISGMGELHLEIYVERLRREYKVECETGQPRVSYRETITQKAEFDYLLKRQSGGPGDYARVVGWIEPNPNGGEDNHFESRVVGGTIPDKYISACQKGFQEACIKGPLLGHKVIGSSMVITDGATHVTDSSDYAFNLAAQMAFGKAFTAAGGQVLEPLMKTTISAPAEFQGNILMLMNKRGTIVDTEVGADEFTMVADCSLNAMFGFSTHLRAATQGKGEFSMEFSHYAPAPPHLQKELVQKYQKELEAKRTK.

A mitochondrion-targeting transit peptide spans 1–59 (MRVIRAVATLHAGRAAAVRQGVRSVSLGACRAAVETPSLRSAGSQFESRRLFSRSSYLR). One can recognise a tr-type G domain in the interval 99 to 385 (ARVRNIGIAA…AVCDYLPNPN (287 aa)). GTP-binding positions include 108–115 (AHIDSGKT), 183–187 (DTPGH), and 237–240 (NKMD).

It belongs to the TRAFAC class translation factor GTPase superfamily. Classic translation factor GTPase family. EF-G/EF-2 subfamily.

It localises to the mitochondrion. Its pathway is protein biosynthesis; polypeptide chain elongation. In terms of biological role, mitochondrial GTPase that catalyzes the GTP-dependent ribosomal translocation step during translation elongation. During this step, the ribosome changes from the pre-translocational (PRE) to the post-translocational (POST) state as the newly formed A-site-bound peptidyl-tRNA and P-site-bound deacylated tRNA move to the P and E sites, respectively. Catalyzes the coordinated movement of the two tRNA molecules, the mRNA and conformational changes in the ribosome. This chain is Elongation factor G, mitochondrial (mef1), found in Neurospora crassa (strain ATCC 24698 / 74-OR23-1A / CBS 708.71 / DSM 1257 / FGSC 987).